The chain runs to 558 residues: Probable beta-glucosidase btgE (558 aa).

An N-terminal signal peptide occupies residues 1–18; it reads MKAAILATAAALTGSALA. Disordered stretches follow at residues 64-105 and 251-305; these read STPS…PETP and LPSS…QMGM. Low complexity-rich tracts occupy residues 76-105 and 252-292; these read PETTSTEEVTTTLHSTSTSTVTVTATPETP and PSSS…SSSA. The segment covering 293-305 has biased composition (polar residues); sequence EVPQTTGSGQMGM. The Proton donor role is filled by Glu399. The Nucleophile role is filled by Glu495.

Belongs to the glycosyl hydrolase 17 family.

It localises to the secreted. Its subcellular location is the cell wall. It catalyses the reaction Hydrolysis of terminal, non-reducing beta-D-glucosyl residues with release of beta-D-glucose.. It participates in glycan metabolism; cellulose degradation. Its function is as follows. Beta-glucosidases are one of a number of cellulolytic enzymes involved in the degradation of cellulosic biomass. Catalyzes the last step releasing glucose from the inhibitory cellobiose. In Aspergillus terreus (strain NIH 2624 / FGSC A1156), this protein is Probable beta-glucosidase btgE (btgE).